A 480-amino-acid polypeptide reads, in one-letter code: Protein nucleotidyltransferase YdiU (480 aa).

ATP contacts are provided by G86, G88, R89, K109, D121, G122, R172, and R179. D248 acts as the Proton acceptor in catalysis. Mg(2+) is bound by residues N249 and D258. D258 is a binding site for ATP.

This sequence belongs to the SELO family. Requires Mg(2+) as cofactor. It depends on Mn(2+) as a cofactor.

It carries out the reaction L-seryl-[protein] + ATP = 3-O-(5'-adenylyl)-L-seryl-[protein] + diphosphate. The enzyme catalyses L-threonyl-[protein] + ATP = 3-O-(5'-adenylyl)-L-threonyl-[protein] + diphosphate. It catalyses the reaction L-tyrosyl-[protein] + ATP = O-(5'-adenylyl)-L-tyrosyl-[protein] + diphosphate. The catalysed reaction is L-histidyl-[protein] + UTP = N(tele)-(5'-uridylyl)-L-histidyl-[protein] + diphosphate. It carries out the reaction L-seryl-[protein] + UTP = O-(5'-uridylyl)-L-seryl-[protein] + diphosphate. The enzyme catalyses L-tyrosyl-[protein] + UTP = O-(5'-uridylyl)-L-tyrosyl-[protein] + diphosphate. In terms of biological role, nucleotidyltransferase involved in the post-translational modification of proteins. It can catalyze the addition of adenosine monophosphate (AMP) or uridine monophosphate (UMP) to a protein, resulting in modifications known as AMPylation and UMPylation. This chain is Protein nucleotidyltransferase YdiU, found in Salmonella typhi.